A 416-amino-acid chain; its full sequence is CapZ-interacting protein (416 aa).

2 disordered regions span residues 1-84 (MEER…KSSP) and 98-416 (AALL…DTKM). Residues 8–20 (TNANVDNSASPSV) show a composition bias toward polar residues. Position 17 is a phosphoserine (Ser17). Ser68 carries the post-translational modification Phosphoserine; by MAPK8; in vitro. A Phosphoserine modification is found at Ser82. Ser83 carries the post-translational modification Phosphoserine; by MAPK8; in vitro. Position 105 is a phosphoserine (Ser105). Ser108 carries the phosphoserine; by MAPK12 and MAPK13 modification. Residues Ser116, Ser120, and Ser123 each carry the phosphoserine modification. A Phosphothreonine modification is found at Thr124. Ser126, Ser127, Ser135, and Ser143 each carry phosphoserine. Basic residues predominate over residues 159–176 (VRTRGSIKRRPPSRRFRR). Ser177 carries the phosphoserine modification. Ser179 carries the phosphoserine; by MAPKAPK2 and MAPKAPK3 modification. Ser216 carries the post-translational modification Phosphoserine; by MAPK8; in vitro. The 104-residue stretch at 227-330 (GVRTLGPAEK…RVQNEEVGPE (104 aa)) folds into the RCSD domain. Position 244 is a phosphoserine; by MAPKAPK2 or MAPKAPK3; in vitro (Ser244). The segment covering 244–273 (SRTEKQEEDRATEEAKNGEKARRSSEEVDG) has biased composition (basic and acidic residues). Phosphoserine occurs at positions 267, 268, 284, 298, and 333. The segment covering 292–349 (AENRCGSPREEKPAGEEAEMEKATEVKGERVQNEEVGPEHDSQETKKLEEGAAVKETP) has biased composition (basic and acidic residues). The residue at position 336 (Thr336) is a Phosphothreonine. Position 351 is a phosphoserine (Ser351). The segment covering 360–372 (DVPKQEKGKEKQQ) has biased composition (basic and acidic residues). Polar residues predominate over residues 382-397 (SPQTGPAQLETSSEVQ).

As to quaternary structure, interacts with CAPZA2 and CAPZB. Post-translationally, dephosphorylation results in its dissociation from CAPZA2. Highly expressed in skeletal muscle and more weakly in cardiac muscle. Also expressed in several lymphoid organs, including spleen, thymus, peripheral blood leukocytes, lymph node and bone marrow.

Its function is as follows. Stress-induced phosphorylation of CAPZIP may regulate the ability of F-actin-capping protein to remodel actin filament assembly. This Homo sapiens (Human) protein is CapZ-interacting protein (RCSD1).